The sequence spans 331 residues: Beta-ketoacyl-[acyl-carrier-protein] synthase III (331 aa).

Residues Cys-115 and His-255 contribute to the active site. Positions 256–260 are ACP-binding; it reads QANFR. Asn-285 is an active-site residue.

Belongs to the thiolase-like superfamily. FabH family. Homodimer.

The protein resides in the cytoplasm. It catalyses the reaction malonyl-[ACP] + acetyl-CoA + H(+) = 3-oxobutanoyl-[ACP] + CO2 + CoA. It participates in lipid metabolism; fatty acid biosynthesis. Its function is as follows. Catalyzes the condensation reaction of fatty acid synthesis by the addition to an acyl acceptor of two carbons from malonyl-ACP. Catalyzes the first condensation reaction which initiates fatty acid synthesis and may therefore play a role in governing the total rate of fatty acid production. Possesses both acetoacetyl-ACP synthase and acetyl transacylase activities. Its substrate specificity determines the biosynthesis of branched-chain and/or straight-chain of fatty acids. In Helicobacter pylori (strain ATCC 700392 / 26695) (Campylobacter pylori), this protein is Beta-ketoacyl-[acyl-carrier-protein] synthase III.